The following is a 1430-amino-acid chain: Gag-Pol polyprotein (1430 aa).

Residue glycine 2 is the site of N-myristoyl glycine; by host attachment. Positions valine 7 to leucine 31 are interaction with Gp41. The tract at residues leucine 8–arginine 43 is interaction with host CALM1. The tract at residues lysine 12–isoleucine 19 is interaction with host AP3D1. The segment at aspartate 14–histidine 33 is interaction with membrane phosphatidylinositol 4,5-bisphosphate and RNA. Positions tryptophan 16–arginine 22 match the Nuclear export signal motif. The short motif at lysine 26–lysine 32 is the Nuclear localization signal element. The interval glutamate 73 to serine 77 is interaction with membrane phosphatidylinositol 4,5-bisphosphate. Tyrosine 128 is subject to Phosphotyrosine; by host. The interval asparagine 185 to glutamine 223 is interaction with human PPIA/CYPA and NUP153. A dimerization/Multimerization of capsid protein p24 region spans residues tyrosine 273 to leucine 359. CCHC-type zinc fingers lie at residues valine 385–alanine 402 and lysine 406–glutamate 423. Positions glutamate 439–serine 480 are disordered. Positions serine 445–serine 455 are enriched in polar residues. The segment at proline 484–leucine 488 is dimerization of protease. The 70-residue stretch at arginine 503–leucine 572 folds into the Peptidase A2 domain. The active-site For protease activity; shared with dimeric partner is aspartate 508. Dimerization of protease regions lie at residues glycine 532 to lysine 538 and asparagine 571 to proline 583. Residues glutamate 626–leucine 816 enclose the Reverse transcriptase domain. Residues aspartate 692, aspartate 767, and aspartate 768 each coordinate Mg(2+). Residues phenylalanine 809–histidine 817 form an RT 'primer grip' region. Positions tryptophan 980–tryptophan 996 match the Tryptophan repeat motif motif. The RNase H type-1 domain occupies isoleucine 1016–arginine 1139. Residues aspartate 1025, glutamate 1060, aspartate 1080, and aspartate 1131 each contribute to the Mg(2+) site. The Integrase-type zinc finger occupies aspartate 1145–glutamine 1186. Zn(2+) is bound by residues histidine 1154, histidine 1158, cysteine 1182, and cysteine 1185. Positions valine 1196–isoleucine 1346 constitute an Integrase catalytic domain. 3 residues coordinate Mg(2+): aspartate 1206, aspartate 1258, and glutamate 1294. The integrase-type DNA-binding region spans phenylalanine 1365–aspartate 1412.

Homotrimer; further assembles as hexamers of trimers. Interacts with gp41 (via C-terminus). Interacts with host CALM1; this interaction induces a conformational change in the Matrix protein, triggering exposure of the myristate group. Interacts with host AP3D1; this interaction allows the polyprotein trafficking to multivesicular bodies during virus assembly. Part of the pre-integration complex (PIC) which is composed of viral genome, matrix protein, Vpr and integrase. In terms of assembly, homodimer; the homodimer further multimerizes as homohexamers or homopentamers. Interacts with human PPIA/CYPA; This interaction stabilizes the capsid. Interacts with human NUP153. Interacts with host PDZD8; this interaction stabilizes the capsid. Interacts with monkey TRIM5; this interaction destabilizes the capsid. As to quaternary structure, homodimer, whose active site consists of two apposed aspartic acid residues. Heterodimer of p66 RT and p51 RT (RT p66/p51). Heterodimerization of RT is essential for DNA polymerase activity. The overall folding of the subdomains is similar in p66 RT and p51 RT but the spatial arrangements of the subdomains are dramatically different. In terms of assembly, homotetramer; may further associate as a homohexadecamer. Part of the pre-integration complex (PIC) which is composed of viral genome, matrix protein, Vpr and integrase. Interacts with human SMARCB1/INI1 and human PSIP1/LEDGF isoform 1. Interacts with human KPNA3; this interaction might play a role in nuclear import of the pre-integration complex. Interacts with human NUP153; this interaction might play a role in nuclear import of the pre-integration complex. It depends on Mg(2+) as a cofactor. In terms of processing, specific enzymatic cleavages by the viral protease yield mature proteins. The protease is released by autocatalytic cleavage. The polyprotein is cleaved during and after budding, this process is termed maturation. Proteolytic cleavage of p66 RT removes the RNase H domain to yield the p51 RT subunit. Nucleocapsid protein p7 might be further cleaved after virus entry. Tyrosine phosphorylated presumably in the virion by a host kinase. Phosphorylation is apparently not a major regulator of membrane association. Post-translationally, phosphorylated possibly by host MAPK1; this phosphorylation is necessary for Pin1-mediated virion uncoating. In terms of processing, methylated by host PRMT6, impairing its function by reducing RNA annealing and the initiation of reverse transcription.

It is found in the host cell membrane. The protein resides in the host endosome. Its subcellular location is the host multivesicular body. It localises to the virion membrane. The protein localises to the host nucleus. It is found in the host cytoplasm. The protein resides in the virion. It carries out the reaction Specific for a P1 residue that is hydrophobic, and P1' variable, but often Pro.. The catalysed reaction is Endohydrolysis of RNA in RNA/DNA hybrids. Three different cleavage modes: 1. sequence-specific internal cleavage of RNA. Human immunodeficiency virus type 1 and Moloney murine leukemia virus enzymes prefer to cleave the RNA strand one nucleotide away from the RNA-DNA junction. 2. RNA 5'-end directed cleavage 13-19 nucleotides from the RNA end. 3. DNA 3'-end directed cleavage 15-20 nucleotides away from the primer terminus.. The enzyme catalyses 3'-end directed exonucleolytic cleavage of viral RNA-DNA hybrid.. It catalyses the reaction DNA(n) + a 2'-deoxyribonucleoside 5'-triphosphate = DNA(n+1) + diphosphate. Protease: The viral protease is inhibited by many synthetic protease inhibitors (PIs), such as amprenavir, atazanavir, indinavir, loprinavir, nelfinavir, ritonavir and saquinavir. Use of protease inhibitors in tritherapy regimens permit more ambitious therapeutic strategies. Reverse transcriptase/ribonuclease H: RT can be inhibited either by nucleoside RT inhibitors (NRTIs) or by non nucleoside RT inhibitors (NNRTIs). NRTIs act as chain terminators, whereas NNRTIs inhibit DNA polymerization by binding a small hydrophobic pocket near the RT active site and inducing an allosteric change in this region. Classical NRTIs are abacavir, adefovir (PMEA), didanosine (ddI), lamivudine (3TC), stavudine (d4T), tenofovir (PMPA), zalcitabine (ddC), and zidovudine (AZT). Classical NNRTIs are atevirdine (BHAP U-87201E), delavirdine, efavirenz (DMP-266), emivirine (I-EBU), and nevirapine (BI-RG-587). The tritherapies used as a basic effective treatment of AIDS associate two NRTIs and one NNRTI. Mediates, with Gag polyprotein, the essential events in virion assembly, including binding the plasma membrane, making the protein-protein interactions necessary to create spherical particles, recruiting the viral Env proteins, and packaging the genomic RNA via direct interactions with the RNA packaging sequence (Psi). Gag-Pol polyprotein may regulate its own translation, by the binding genomic RNA in the 5'-UTR. At low concentration, the polyprotein would promote translation, whereas at high concentration, the polyprotein would encapsidate genomic RNA and then shut off translation. In terms of biological role, targets the polyprotein to the plasma membrane via a multipartite membrane-binding signal, that includes its myristoylated N-terminus. Matrix protein is part of the pre-integration complex. Implicated in the release from host cell mediated by Vpu. Binds to RNA. Functionally, forms the conical core that encapsulates the genomic RNA-nucleocapsid complex in the virion. Most core are conical, with only 7% tubular. The core is constituted by capsid protein hexamer subunits. The core is disassembled soon after virion entry. Host restriction factors such as TRIM5-alpha or TRIMCyp bind retroviral capsids and cause premature capsid disassembly, leading to blocks in reverse transcription. Capsid restriction by TRIM5 is one of the factors which restricts HIV-1 to the human species. Host PIN1 apparently facilitates the virion uncoating. On the other hand, interactions with PDZD8 or CYPA stabilize the capsid. Its function is as follows. Encapsulates and protects viral dimeric unspliced genomic RNA (gRNA). Binds these RNAs through its zinc fingers. Acts as a nucleic acid chaperone which is involved in rearangement of nucleic acid secondary structure during gRNA retrotranscription. Also facilitates template switch leading to recombination. As part of the polyprotein, participates in gRNA dimerization, packaging, tRNA incorporation and virion assembly. Aspartyl protease that mediates proteolytic cleavages of Gag and Gag-Pol polyproteins during or shortly after the release of the virion from the plasma membrane. Cleavages take place as an ordered, step-wise cascade to yield mature proteins. This process is called maturation. Displays maximal activity during the budding process just prior to particle release from the cell. Also cleaves Nef and Vif, probably concomitantly with viral structural proteins on maturation of virus particles. Hydrolyzes host EIF4GI and PABP1 in order to shut off the capped cellular mRNA translation. The resulting inhibition of cellular protein synthesis serves to ensure maximal viral gene expression and to evade host immune response. Also mediates cleavage of host YTHDF3. Mediates cleavage of host CARD8, thereby activating the CARD8 inflammasome, leading to the clearance of latent HIV-1 in patient CD4(+) T-cells after viral reactivation; in contrast, HIV-1 can evade CARD8-sensing when its protease remains inactive in infected cells prior to viral budding. In terms of biological role, multifunctional enzyme that converts the viral RNA genome into dsDNA in the cytoplasm, shortly after virus entry into the cell. This enzyme displays a DNA polymerase activity that can copy either DNA or RNA templates, and a ribonuclease H (RNase H) activity that cleaves the RNA strand of RNA-DNA heteroduplexes in a partially processive 3' to 5' endonucleasic mode. Conversion of viral genomic RNA into dsDNA requires many steps. A tRNA(3)-Lys binds to the primer-binding site (PBS) situated at the 5'-end of the viral RNA. RT uses the 3' end of the tRNA primer to perform a short round of RNA-dependent minus-strand DNA synthesis. The reading proceeds through the U5 region and ends after the repeated (R) region which is present at both ends of viral RNA. The portion of the RNA-DNA heteroduplex is digested by the RNase H, resulting in a ssDNA product attached to the tRNA primer. This ssDNA/tRNA hybridizes with the identical R region situated at the 3' end of viral RNA. This template exchange, known as minus-strand DNA strong stop transfer, can be either intra- or intermolecular. RT uses the 3' end of this newly synthesized short ssDNA to perform the RNA-dependent minus-strand DNA synthesis of the whole template. RNase H digests the RNA template except for two polypurine tracts (PPTs) situated at the 5'-end and near the center of the genome. It is not clear if both polymerase and RNase H activities are simultaneous. RNase H probably can proceed both in a polymerase-dependent (RNA cut into small fragments by the same RT performing DNA synthesis) and a polymerase-independent mode (cleavage of remaining RNA fragments by free RTs). Secondly, RT performs DNA-directed plus-strand DNA synthesis using the PPTs that have not been removed by RNase H as primers. PPTs and tRNA primers are then removed by RNase H. The 3' and 5' ssDNA PBS regions hybridize to form a circular dsDNA intermediate. Strand displacement synthesis by RT to the PBS and PPT ends produces a blunt ended, linear dsDNA copy of the viral genome that includes long terminal repeats (LTRs) at both ends. Functionally, catalyzes viral DNA integration into the host chromosome, by performing a series of DNA cutting and joining reactions. This enzyme activity takes place after virion entry into a cell and reverse transcription of the RNA genome in dsDNA. The first step in the integration process is 3' processing. This step requires a complex comprising the viral genome, matrix protein, Vpr and integrase. This complex is called the pre-integration complex (PIC). The integrase protein removes 2 nucleotides from each 3' end of the viral DNA, leaving recessed CA OH's at the 3' ends. In the second step, the PIC enters cell nucleus. This process is mediated through integrase and Vpr proteins, and allows the virus to infect a non dividing cell. This ability to enter the nucleus is specific of lentiviruses, other retroviruses cannot and rely on cell division to access cell chromosomes. In the third step, termed strand transfer, the integrase protein joins the previously processed 3' ends to the 5' ends of strands of target cellular DNA at the site of integration. The 5'-ends are produced by integrase-catalyzed staggered cuts, 5 bp apart. A Y-shaped, gapped, recombination intermediate results, with the 5'-ends of the viral DNA strands and the 3' ends of target DNA strands remaining unjoined, flanking a gap of 5 bp. The last step is viral DNA integration into host chromosome. This involves host DNA repair synthesis in which the 5 bp gaps between the unjoined strands are filled in and then ligated. Since this process occurs at both cuts flanking the HIV genome, a 5 bp duplication of host DNA is produced at the ends of HIV-1 integration. Alternatively, Integrase may catalyze the excision of viral DNA just after strand transfer, this is termed disintegration. The sequence is that of Gag-Pol polyprotein (gag-pol) from Homo sapiens (Human).